Reading from the N-terminus, the 1171-residue chain is DNA-directed RNA polymerase subunit beta' (1171 aa).

Positions 60, 62, 75, and 78 each coordinate Zn(2+). Positions 299-319 (GRRGKPVTGPGNRPLKSLSDM) are disordered. Mg(2+) is bound by residues aspartate 449, aspartate 451, and aspartate 453. Zn(2+) contacts are provided by cysteine 790, cysteine 864, cysteine 871, and cysteine 874.

This sequence belongs to the RNA polymerase beta' chain family. The RNAP catalytic core consists of 2 alpha, 1 beta, 1 beta' and 1 omega subunit. When a sigma factor is associated with the core the holoenzyme is formed, which can initiate transcription. Requires Mg(2+) as cofactor. Zn(2+) is required as a cofactor.

It catalyses the reaction RNA(n) + a ribonucleoside 5'-triphosphate = RNA(n+1) + diphosphate. Functionally, DNA-dependent RNA polymerase catalyzes the transcription of DNA into RNA using the four ribonucleoside triphosphates as substrates. This is DNA-directed RNA polymerase subunit beta' from Alkaliphilus metalliredigens (strain QYMF).